We begin with the raw amino-acid sequence, 385 residues long: UDP-N-acetylglucosamine--N-acetylmuramyl-(pentapeptide) pyrophosphoryl-undecaprenol N-acetylglucosamine transferase (385 aa).

UDP-N-acetyl-alpha-D-glucosamine-binding positions include 11–13 (TGG), N117, R160, S215, and Q317.

It belongs to the glycosyltransferase 28 family. MurG subfamily.

It localises to the cell inner membrane. The enzyme catalyses di-trans,octa-cis-undecaprenyl diphospho-N-acetyl-alpha-D-muramoyl-L-alanyl-D-glutamyl-meso-2,6-diaminopimeloyl-D-alanyl-D-alanine + UDP-N-acetyl-alpha-D-glucosamine = di-trans,octa-cis-undecaprenyl diphospho-[N-acetyl-alpha-D-glucosaminyl-(1-&gt;4)]-N-acetyl-alpha-D-muramoyl-L-alanyl-D-glutamyl-meso-2,6-diaminopimeloyl-D-alanyl-D-alanine + UDP + H(+). It functions in the pathway cell wall biogenesis; peptidoglycan biosynthesis. In terms of biological role, cell wall formation. Catalyzes the transfer of a GlcNAc subunit on undecaprenyl-pyrophosphoryl-MurNAc-pentapeptide (lipid intermediate I) to form undecaprenyl-pyrophosphoryl-MurNAc-(pentapeptide)GlcNAc (lipid intermediate II). This Rickettsia prowazekii (strain Madrid E) protein is UDP-N-acetylglucosamine--N-acetylmuramyl-(pentapeptide) pyrophosphoryl-undecaprenol N-acetylglucosamine transferase.